The primary structure comprises 333 residues: Ribokinase (333 aa).

Substrate contacts are provided by residues 10 to 12 (NYD), 38 to 42 (GKGLN), and Glu149. ATP is bound by residues Asn193 and 248–253 (TLGSRG). Positions 277 and 279 each coordinate K(+). Residue 282–283 (GD) participates in ATP binding. Residue Asp283 coordinates substrate. The active-site Proton acceptor is Asp283. 4 residues coordinate K(+): Thr313, Arg316, Gly318, and Ser322.

Belongs to the carbohydrate kinase PfkB family. Ribokinase subfamily. As to quaternary structure, homodimer. Mg(2+) serves as cofactor.

The protein resides in the cytoplasm. It is found in the nucleus. It carries out the reaction D-ribose + ATP = D-ribose 5-phosphate + ADP + H(+). It participates in carbohydrate metabolism; D-ribose degradation; D-ribose 5-phosphate from beta-D-ribopyranose: step 2/2. Its activity is regulated as follows. Activated by a monovalent cation that binds near, but not in, the active site. The most likely occupant of the site in vivo is potassium. Ion binding induces a conformational change that may alter substrate affinity. Its function is as follows. Catalyzes the phosphorylation of ribose at O-5 in a reaction requiring ATP and magnesium. The resulting D-ribose-5-phosphate can then be used either for sythesis of nucleotides, histidine, and tryptophan, or as a component of the pentose phosphate pathway. The polypeptide is Ribokinase (Saccharomyces cerevisiae (strain ATCC 204508 / S288c) (Baker's yeast)).